Here is a 538-residue protein sequence, read N- to C-terminus: Ubiquitin domain-containing protein DSK2a (538 aa).

The region spanning V18–S93 is the Ubiquitin-like domain. The tract at residues P95–L120 is disordered. Polar residues predominate over residues A102 to N119. STI1 domains are found at residues G138 to M179 and N192 to M231. A disordered region spans residues Q289–P316. STI1 domains follow at residues S357–L394 and N398–M433. Residues P491 to S535 enclose the UBA domain.

In terms of assembly, interacts with 'Lys-48'-linked polyubiquitin chains via its UBA domain. Interacts with RPN10 and RPN13. Interacts with PEX2 and PEX12. In terms of tissue distribution, ubiquitous with a strong expression level in inflorescence.

Its subcellular location is the nucleus. It is found in the cytoplasm. Functionally, binds and presumably selects ubiquitin-conjugates for destruction. Prefers multiubiquitin chains rather than single ubiquitins, with a binding affinity for 'Lys-48'-linked ubiquitin chains. Acts as a ubiquitin receptor that associates with the 26S proteasomal docking subunit RPN10 for the indirect recognition of ubiquitinated substrates of ubiquitin/26S proteasome-mediated proteolysis (UPP). This Arabidopsis thaliana (Mouse-ear cress) protein is Ubiquitin domain-containing protein DSK2a (DSK2A).